Here is a 128-residue protein sequence, read N- to C-terminus: Crossover junction endodeoxyribonuclease Hjc (128 aa).

Residue glutamate 10 coordinates Mg(2+). The active site involves serine 30. Residues aspartate 34 and glutamate 47 each coordinate Mg(2+).

The protein belongs to the Holliday junction resolvase Hjc family. Homodimer. Mg(2+) serves as cofactor.

It carries out the reaction Endonucleolytic cleavage at a junction such as a reciprocal single-stranded crossover between two homologous DNA duplexes (Holliday junction).. In terms of biological role, a structure-specific endonuclease that resolves Holliday junction (HJ) intermediates during genetic recombination. Cleaves 4-way DNA junctions introducing paired nicks in opposing strands, leaving a 5'-terminal phosphate and a 3'-terminal hydroxyl group that are subsequently ligated to produce recombinant products. This chain is Crossover junction endodeoxyribonuclease Hjc, found in Thermococcus kodakarensis (strain ATCC BAA-918 / JCM 12380 / KOD1) (Pyrococcus kodakaraensis (strain KOD1)).